The sequence spans 281 residues: NADPH-dependent 7-cyano-7-deazaguanine reductase (281 aa).

Substrate is bound at residue 88–90; it reads IES. 90–91 serves as a coordination point for NADPH; sequence SK. The Thioimide intermediate role is filled by C189. Catalysis depends on D196, which acts as the Proton donor. 228–229 serves as a coordination point for substrate; the sequence is HE. Residue 257-258 coordinates NADPH; it reads RG.

The protein belongs to the GTP cyclohydrolase I family. QueF type 2 subfamily. Homodimer.

The protein localises to the cytoplasm. The catalysed reaction is 7-aminomethyl-7-carbaguanine + 2 NADP(+) = 7-cyano-7-deazaguanine + 2 NADPH + 3 H(+). Its pathway is tRNA modification; tRNA-queuosine biosynthesis. Catalyzes the NADPH-dependent reduction of 7-cyano-7-deazaguanine (preQ0) to 7-aminomethyl-7-deazaguanine (preQ1). This chain is NADPH-dependent 7-cyano-7-deazaguanine reductase, found in Proteus mirabilis (strain HI4320).